The chain runs to 35 residues: Photosystem II reaction center protein T (35 aa).

The helical transmembrane segment at 3–23 threads the bilayer; sequence ALVYTFLLVSTLGIIFFAIFF.

The protein belongs to the PsbT family. PSII is composed of 1 copy each of membrane proteins PsbA, PsbB, PsbC, PsbD, PsbE, PsbF, PsbH, PsbI, PsbJ, PsbK, PsbL, PsbM, PsbT, PsbY, PsbZ, Psb30/Ycf12, at least 3 peripheral proteins of the oxygen-evolving complex and a large number of cofactors. It forms dimeric complexes.

The protein localises to the plastid. It is found in the chloroplast thylakoid membrane. Its function is as follows. Found at the monomer-monomer interface of the photosystem II (PS II) dimer, plays a role in assembly and dimerization of PSII. PSII is a light-driven water plastoquinone oxidoreductase, using light energy to abstract electrons from H(2)O, generating a proton gradient subsequently used for ATP formation. The protein is Photosystem II reaction center protein T of Stangeria eriopus (Natal grass cycad).